The chain runs to 323 residues: ADP-ribose glycohydrolase MACROD1 (323 aa).

N6-succinyllysine is present on residues K94, K101, and K127. A Glycyl lysine isopeptide (Lys-Gly) (interchain with G-Cter in SUMO2) cross-link involves residue K136. In terms of domain architecture, Macro spans 139–320 (DPKYKKDKQL…IYRERLPHYF (182 aa)). A substrate-binding site is contributed by 157–159 (GDI). K161 carries the N6-acetyllysine modification. Residues 170–172 (AAN), 177–182 (GGGGVD), 265–271 (ISTGVFG), and F304 each bind substrate.

Belongs to the MacroD-type family. MacroD1/2-like subfamily. As to quaternary structure, interacts with ESR1; Interacts in a manner that is estrogen independent but is enhanced by estrogen. Interacts (via macro domain) with AR.

The protein localises to the nucleus. It carries out the reaction 3''-O-acetyl-ADP-D-ribose + H2O = ADP-D-ribose + acetate + H(+). The catalysed reaction is 2''-O-acetyl-ADP-D-ribose + H2O = ADP-D-ribose + acetate + H(+). It catalyses the reaction 4-O-(ADP-D-ribosyl)-L-aspartyl-[protein] + H2O = L-aspartyl-[protein] + ADP-D-ribose + H(+). The enzyme catalyses 5-O-(ADP-D-ribosyl)-L-glutamyl-[protein] + H2O = L-glutamyl-[protein] + ADP-D-ribose + H(+). It carries out the reaction alpha-NAD(+) + H2O = ADP-D-ribose + nicotinamide + H(+). With respect to regulation, subject to competitive inhibition by the product ADP-ribose. Functionally, removes ADP-ribose from aspartate and glutamate residues in proteins bearing a single ADP-ribose moiety. Inactive towards proteins bearing poly-ADP-ribose. Deacetylates O-acetyl-ADP ribose, a signaling molecule generated by the deacetylation of acetylated lysine residues in histones and other proteins. Plays a role in estrogen signaling. Binds to androgen receptor (AR) and amplifies the transactivation function of AR in response to androgen. May play an important role in carcinogenesis and/or progression of hormone-dependent cancers by feed-forward mechanism that activates ESR1 transactivation. Could be an ESR1 coactivator, providing a positive feedback regulatory loop for ESR1 signal transduction. Could be involved in invasive growth by down-regulating CDH1 in endometrial cancer cells. Enhances ESR1-mediated transcription activity. The polypeptide is ADP-ribose glycohydrolase MACROD1 (Mus musculus (Mouse)).